A 621-amino-acid polypeptide reads, in one-letter code: MAAAAVDSAMEVVPALAEEAAPEVAGLSCLVNLPGEVLEYILCCGSLTAADIGRVSSTCRRLRELCQSSGKVWKEQFRVRWPSLMKHYSPTDYVNWLEEYKVRQKAGLEARKIVASFSKRFFSEHVPCNGFSDIENLEGPEIFFEDELVCILNMEGRKALTWKYYAKKILYYLRQQKILNNLKAFLQQPDDYESYLEGAVYIDQYCNPLSDISLKDIQAQIDSIVELVCKTLRGINSRHPSLAFKAGESSMIVEIELQSQVLDAMNYVLYDQLKFQGNRMDYYNALNLYMHQVLIRRTGIPISMSLLYLTIARQLGVPLEPVNFPSHFLLRWCQGAEGATLDIFDYIYIDAFGKGKQLTVKECEYLIGQHVTAALYGVVNVKKVLQRMVGNLLSLGKREGIDQSYQLLRDSLDLYLAMYPDQVQLLLLQARLYFHLGIWPEKVLDILQHIQTLDPGQHGAVGYLVQHTLEHIERKKEEVGVEVKLRSDEKHRDVCYSIGLIMKHKRYGYNCVIYGWDPTCMMGHEWIRNMNVHSLPHGHHQPFYNVLVEDGSCRYAAQENLEYNVEPQEISHPDVGRYFSEFTGTHYIPNAELEIRYPEDLEFVYETVQNIYSAKKENIDE.

The F-box domain occupies 28–77 (SCLVNLPGEVLEYILCCGSLTAADIGRVSSTCRRLRELCQSSGKVWKEQF).

As to quaternary structure, interacts with SKP1 and CUL1.

Functionally, substrate-recognition component of the SCF (SKP1-CUL1-F-box protein)-type E3 ubiquitin ligase complex. This is F-box only protein 21 (FBXO21) from Pongo abelii (Sumatran orangutan).